The following is a 1337-amino-acid chain: uncharacterized protein (1337 aa).

Disordered regions lie at residues 1 to 94 (MPTS…QSSA) and 119 to 174 (ARDI…PSFF). Low complexity-rich tracts occupy residues 18-37 (SNTSSTESSSSNNSSTASGS) and 68-79 (SSTHFQSSHSVS). Residues 80-94 (NAHNQSPLNQSQSSA) show a composition bias toward polar residues. Low complexity predominate over residues 123–147 (PQQPSHSQNPSSSSSSSSSQSSQHS). Over residues 157 to 167 (NEKKSLDDPSP) the composition is skewed to basic and acidic residues. Helical transmembrane passes span 209–229 (GLKPVIRAAINSWIAFLLVLA), 241–261 (FFVVITSILVPAMEPIAPMLW), 267–287 (FLLLFSAYAWTVLAAKLATVA), 328–348 (VRPLPSIIWALFEFSAVALFI), 361–381 (CVFSIICTAVSANMGPMYPYF), and 387–407 (LFFIVPNCVQTGITIGCTLFI). 2 disordered regions span residues 623 to 662 (SHVRTGSNNSEAPLAAKTSTTKRNGDLLEPQSPSLRSHKS) and 868 to 894 (YDENIHNDVDKDMNQSSTQPRDPDADH). Polar residues predominate over residues 626–644 (RTGSNNSEAPLAAKTSTTK). Residues 868 to 880 (YDENIHNDVDKDM) show a composition bias toward basic and acidic residues. 6 helical membrane passes run 917–937 (MNVFVLKVGTLAVICTIPAFC), 975–995 (IFGTFFGAILGMVIWYTGSGH), 997–1017 (LGNAYGLAAVWGAAIPFIQFI), 1021–1041 (FVILTPMPAVIFCVTAALTVT), 1066–1086 (FLTVAAGITVAFIFSFLPQPR), and 1275–1295 (FAVGCTIAYAVVNHIDRIMFI).

Its subcellular location is the membrane. This is an uncharacterized protein from Schizosaccharomyces pombe (strain 972 / ATCC 24843) (Fission yeast).